The primary structure comprises 525 residues: Glucans biosynthesis protein G (525 aa).

The signal sequence occupies residues 1–35 (MIFRSVSNTDFRARVRTLLLAGSTALAFVAAPVWA).

Belongs to the OpgD/OpgG family.

The protein localises to the periplasm. It participates in glycan metabolism; osmoregulated periplasmic glucan (OPG) biosynthesis. Its function is as follows. Involved in the biosynthesis of osmoregulated periplasmic glucans (OPGs). This is Glucans biosynthesis protein G from Pseudomonas paraeruginosa (strain DSM 24068 / PA7) (Pseudomonas aeruginosa (strain PA7)).